We begin with the raw amino-acid sequence, 193 residues long: Peptide deformylase (193 aa).

Residues Cys-111 and His-155 each coordinate Fe cation. Glu-156 is a catalytic residue. His-159 contributes to the Fe cation binding site.

The protein belongs to the polypeptide deformylase family. It depends on Fe(2+) as a cofactor.

The catalysed reaction is N-terminal N-formyl-L-methionyl-[peptide] + H2O = N-terminal L-methionyl-[peptide] + formate. Its function is as follows. Removes the formyl group from the N-terminal Met of newly synthesized proteins. Requires at least a dipeptide for an efficient rate of reaction. N-terminal L-methionine is a prerequisite for activity but the enzyme has broad specificity at other positions. The sequence is that of Peptide deformylase from Mycoplasma genitalium (strain ATCC 33530 / DSM 19775 / NCTC 10195 / G37) (Mycoplasmoides genitalium).